A 505-amino-acid chain; its full sequence is Protein phosphatase 1J (505 aa).

The segment at 1-103 (MLNRVRSAVA…PPDTGRRLPW (103 aa)) is disordered. Residues 27-50 (DLPNAASAPPAAAPEAPRSPPAKA) show a composition bias toward low complexity. Phosphoserine is present on residues S66 and S76. The region spanning 104–498 (STGYAEVINA…DDISVFVIPL (395 aa)) is the PPM-type phosphatase domain.

The protein belongs to the PP2C family. Interacts with UBE2I/UBC9.

It catalyses the reaction O-phospho-L-seryl-[protein] + H2O = L-seryl-[protein] + phosphate. It carries out the reaction O-phospho-L-threonyl-[protein] + H2O = L-threonyl-[protein] + phosphate. This is Protein phosphatase 1J (PPM1J) from Homo sapiens (Human).